Reading from the N-terminus, the 594-residue chain is Sucrose transport protein SUC3 (594 aa).

Ser2 carries the N-acetylserine modification. The Cytoplasmic portion of the chain corresponds to 2 to 58 (SDSVSISVPYRNLRKEIELETVTKHRQNESGSSSFSESASPSNHSDSADGESVSKNC). The segment at 23-50 (VTKHRQNESGSSSFSESASPSNHSDSAD) is disordered. The span at 31–46 (SGSSSFSESASPSNHS) shows a compositional bias: low complexity. The helical transmembrane segment at 59 to 79 (SLVTLVLSCTVAAGVQFGWAL) threads the bilayer. The Extracellular portion of the chain corresponds to 80–98 (QLSLLTPYIQTLGISHAFS). Residues 99–119 (SFIWLCGPITGLVVQPFVGIW) form a helical membrane-spanning segment. Topologically, residues 120 to 131 (SDKCTSKYGRRR) are cytoplasmic. The chain crosses the membrane as a helical span at residues 132-152 (PFILVGSFMISIAVIIIGFSA). The Extracellular portion of the chain corresponds to 153-174 (DIGYLLGDSKEHCSTFKGTRTR). Residues 175 to 195 (AAVVFIIGFWLLDLANNTVQG) traverse the membrane as a helical segment. At 196 to 214 (PARALLADLSGPDQRNTAN) the chain is on the cytoplasmic side. A helical transmembrane segment spans residues 215 to 235 (AVFCLWMAIGNILGFSAGASG). Residues 236-257 (KWQEWFPFLTSRACCAACGNLK) are Extracellular-facing. A helical membrane pass occupies residues 258 to 278 (AAFLLAVVFLTICTLVTIYFA). The Cytoplasmic portion of the chain corresponds to 279 to 365 (KEIPFTSNKP…LTSLRHLPPA (87 aa)). Residues 366-386 (MHSVLIVMALTWLSWFPFFLF) form a helical membrane-spanning segment. Residues 387 to 417 (DTDWMGREVYHGDPTGDSLHMELYDQGVREG) lie on the Extracellular side of the membrane. The chain crosses the membrane as a helical span at residues 418-438 (ALGLLLNSVVLGISSFLIEPM). Residues 439–445 (CQRMGAR) lie on the Cytoplasmic side of the membrane. A helical transmembrane segment spans residues 446-466 (VVWALSNFTVFACMAGTAVIS). The Extracellular portion of the chain corresponds to 467-489 (LMSLSDDKNGIEYIMRGNETTRT). An N-linked (GlcNAc...) asparagine glycan is attached at Asn484. Residues 490–510 (AAVIVFALLGFPLAITYSVPF) form a helical membrane-spanning segment. Over 511 to 525 (SVTAEVTADSGGGQG) the chain is Cytoplasmic. Residues 526-546 (LAIGVLNLAIVIPQMIVSLGA) form a helical membrane-spanning segment. Residues 547–555 (GPWDQLFGG) are Extracellular-facing. A helical transmembrane segment spans residues 556–576 (GNLPAFVLASVAAFAAGVIAL). The Cytoplasmic segment spans residues 577–594 (QRLPTLSSSFKSTGFHIG).

The protein belongs to the glycoside-pentoside-hexuronide (GPH) cation symporter transporter (TC 2.A.2.4) family. Homodimer. Interacts with SUC2 and SUC4. As to expression, mostly localized in parenchymatic cells next to vascular tissues (at protein level). Present in stipules, trichomes, hydathodes and guard cells of source leaves, as well as in lateral root tips and flowers.

It localises to the cell membrane. It catalyses the reaction sucrose(out) + H(+)(out) = sucrose(in) + H(+)(in). It participates in glycan biosynthesis; sucrose metabolism. With respect to regulation, inhibited by protonophores (e.g. dinitrophenol and carbonyl cyanide m-chlorophenyl-hydrazone (CCCP)) and SH group inhibitors (e.g. p-chloromercuribenzene sulphonic acid (PCMBS)). Functionally, responsible for the transport of sucrose into the cell, with the concomitant uptake of protons (symport system). Can also transport maltose at a lesser rate. May also transport biotin. Probably involved in carpel maturation that leads to pod shatter and seed dispersal. The chain is Sucrose transport protein SUC3 from Arabidopsis thaliana (Mouse-ear cress).